A 780-amino-acid polypeptide reads, in one-letter code: ATP-dependent 6-phosphofructokinase, muscle type (780 aa).

At Thr-2 the chain carries N-acetylthreonine. Positions 2-390 (THEEHHAAKT…NWEVYKLLAH (389 aa)) are N-terminal catalytic PFK domain 1. ATP is bound by residues Gly-25, 88-89 (RC), and 118-121 (GDGS). Asp-119 serves as a coordination point for Mg(2+). The residue at position 133 (Ser-133) is a Phosphoserine. Residues 164-166 (SID), Arg-201, 208-210 (MGR), Glu-264, Arg-292, and 298-301 (HVQR) contribute to the substrate site. Asp-166 serves as the catalytic Proton acceptor. Ser-377 carries the phosphoserine modification. The tract at residues 391–401 (VRPPVSKGGLH) is interdomain linker. The C-terminal regulatory PFK domain 2 stretch occupies residues 402 to 780 (TVAVMNVGAP…SRKRSGEAAV (379 aa)). Beta-D-fructose 2,6-bisphosphate is bound by residues Arg-471 and 528–532 (TVSNN). Ser-530 is a glycosylation site (O-linked (GlcNAc) serine). Lys-557 is subject to N6-(2-hydroxyisobutyryl)lysine. Beta-D-fructose 2,6-bisphosphate contacts are provided by residues Arg-566, 573 to 575 (MGG), Glu-629, Arg-655, and 661 to 664 (HMQQ). Position 667 is a phosphoserine (Ser-667). Residue Arg-735 participates in beta-D-fructose 2,6-bisphosphate binding. A Phosphoserine modification is found at Ser-775.

The protein belongs to the phosphofructokinase type A (PFKA) family. ATP-dependent PFK group I subfamily. Eukaryotic two domain clade 'E' sub-subfamily. In terms of assembly, homo- and heterotetramers. Phosphofructokinase (PFK) enzyme functions as a tetramer composed of different combinations of 3 types of subunits, called PFKM (M), PFKL (L) and PFKP (P). The composition of the PFK tetramer differs according to the tissue type it is present in. The kinetic and regulatory properties of the tetrameric enzyme are dependent on the subunit composition, hence can vary across tissues. Isoform 2 and isoform 3 interact (via N-terminal testis-specific region) with GSTM5. Isoform 2 and isoform 3 interact (via C-terminus) with HK1 (via N-terminal spermatogenic cell-specific region). The cofactor is Mg(2+). Post-translationally, glcNAcylation decreases enzyme activity. In terms of tissue distribution, isoform 1 is expressed in skeletal muscle (at protein level). Isoform 2 and isoform 3 are testis-specific and are detected in quiescent sperm (at protein level). They are first detected in the cytoplasm of round spermatids and subsequently in the flagellum of elongated spermatids extending into the seminiferous tubule lumen (at protein level). Isoform 2 is expressed at higher level than isoform 3 in testis.

It localises to the cytoplasm. The protein resides in the cell projection. It is found in the cilium. Its subcellular location is the flagellum. It carries out the reaction beta-D-fructose 6-phosphate + ATP = beta-D-fructose 1,6-bisphosphate + ADP + H(+). It functions in the pathway carbohydrate degradation; glycolysis; D-glyceraldehyde 3-phosphate and glycerone phosphate from D-glucose: step 3/4. Allosterically activated by ADP, AMP, or fructose 2,6-bisphosphate, and allosterically inhibited by ATP or citrate. Functionally, catalyzes the phosphorylation of D-fructose 6-phosphate to fructose 1,6-bisphosphate by ATP, the first committing step of glycolysis. The polypeptide is ATP-dependent 6-phosphofructokinase, muscle type (Pfkm) (Mus musculus (Mouse)).